A 730-amino-acid chain; its full sequence is MSNSNNNNNNKKLAISLKNVCRGYGNTKVIDNLNLQIKSGTINCLIGASGSGKTTILRTILGRLIPDSGEVLVFGKRPHDIGGVPGSICGFCPQEGALYYDLTLDHTLNFFSNVHQIPKDKFESKKNEIIKLLDLPQINSRSVGLLSGGQKKRVSLAVALLHSPKLLILDEPTVGIDMEVASNIWSYLRSLANSGVTIIITTHYINEAVGSDNVFLLRDGKILENGAPNYLIERYESQTLEEVFLKLCKRDNAQSIVDSKKNNNNSYFSSQEIIDVESHIVNNNNNNNNNNNNNNYNNNDDEENYNDDIYNDKKPLIGISKEDENNTNGSTNKESGILFRFYKVLLHSVAIGKRKFIQIIRNKVVLSFELLSPSVQVLLYFLAIGGSPKNLEFGVVNLDVGPIGSMYINSLSNTGIFNFHNYNSTTEAIEQIKSGNSFGLLDINAQFSEAILENFMNLSQYNPNGQIDLYMDFTNYQITLIVEQQLALSFETLAKQQANITMNPIKTVTPTVYGNPNSKFIDFLAPGMVCLISFAHAISITSVSFVKEKVDGSLDRLFAYGVRTSSIVFGHFLGHLPLLLVQITVLLLIAIYGFNVPIEGNIALVFLMTVSLAFVGMSLGLVISAVSRVETEAIQLSLGVYFPTLICSGTLWPLQSLPNWFVWFPNILPATHAGNAMRDIMLKGVGLHYKEVWVAFLVVLSWLIFLIFIAVLALNEKDKNLKLSCFKKRK.

Residues 15–244 (ISLKNVCRGY…YESQTLEEVF (230 aa)) enclose the ABC transporter domain. 47–54 (GASGSGKT) contacts ATP. Positions 281–303 (VNNNNNNNNNNNNNNYNNNDDEE) are disordered. A compositionally biased stretch (low complexity) spans 282-298 (NNNNNNNNNNNNNNYNN). An ABC transmembrane type-2 domain is found at 489-717 (SFETLAKQQA…FIAVLALNEK (229 aa)). The next 5 membrane-spanning stretches (helical) occupy residues 520–540 (FIDFLAPGMVCLISFAHAISI), 572–592 (FLGHLPLLLVQITVLLLIAIY), 602–622 (IALVFLMTVSLAFVGMSLGLV), 634–654 (IQLSLGVYFPTLICSGTLWPL), and 692–712 (VWVAFLVVLSWLIFLIFIAVL).

Belongs to the ABC transporter superfamily.

It is found in the membrane. In Dictyostelium discoideum (Social amoeba), this protein is ABC transporter G family member 20 (abcG20).